Consider the following 384-residue polypeptide: Protein V (384 aa).

2 disordered regions span residues 1–23 and 38–317; these read MDQD…GGRE and SEPT…TKKG. Over residues 7–20 the composition is skewed to basic and acidic residues; sequence ILKEDSEVEREAPG. Residues 50-59 are compositionally biased toward polar residues; it reads LHNTINTPQG. Ser-68 is subject to Phosphoserine; by host. The span at 83 to 101 shows a compositional bias: basic and acidic residues; the sequence is RSGEESRVSGRTSKPEAEA. The residue at position 125 (Ser-125) is a Phosphoserine; by host. The span at 150 to 168 shows a compositional bias: basic and acidic residues; the sequence is GIEDENREMAAHPDKRGED. A compositionally biased stretch (polar residues) spans 191–206; that stretch reads ASNNGRSMEPGSSHSA. Phosphoserine; by host is present on residues Ser-192, Ser-249, Ser-257, and Ser-260. His-318, Cys-337, Cys-341, Cys-353, Cys-355, Cys-358, Cys-362, and Cys-365 together coordinate Zn(2+).

It belongs to the paramyxoviruses V protein family. As to quaternary structure, interacts with host IFIH1/MDA5 and DHX58/LGP2. Interacts with host IRF3. Interacts with host RIGI regulatory protein (via CARDs domain) and host TRIM25 (via SPRY domain); these interactions prevent TRIM25-mediated ubiquitination of RIG-I and disrupts downstream RIG-I signaling.

It localises to the host cytoplasm. Its function is as follows. Plays an essential role in the inhibition of host immune response. Prevents the establishment of cellular antiviral state by blocking interferon-alpha/beta (IFN-alpha/beta) production and signaling pathway. Interacts with host IFIH1/MDA5 and DHX58/LGP2 to inhibit the transduction pathway involved in the activation of IFN-beta promoter, thus protecting the virus against cell antiviral state. Also interacts with and inhibits host IRF3. Blocks the type I interferon signaling pathway by disrupting the RIG-I signaling pathway. This chain is Protein V (P/V/C), found in Sendai virus (strain Fushimi) (SeV).